Consider the following 523-residue polypeptide: NAD(P)H-quinone oxidoreductase subunit 2 (523 aa).

14 consecutive transmembrane segments (helical) span residues 29-49 (AIAP…VDLA), 57-77 (WVPP…AQQW), 94-114 (LAIA…LISW), 123-143 (PIGE…LLCG), 147-167 (LVSV…LAGY), 182-202 (LLVG…LYGL), 221-243 (PLAA…AVPF), 255-275 (PTPV…ALAL), 291-311 (LLFT…ALAQ), 317-337 (MLAY…VCGT), 345-365 (VLYM…IILF), 389-409 (LGLS…GFFG), 424-444 (LLVV…ISVI), and 477-497 (IALV…NPLF).

This sequence belongs to the complex I subunit 2 family. NDH-1 can be composed of about 15 different subunits; different subcomplexes with different compositions have been identified which probably have different functions.

The protein localises to the cellular thylakoid membrane. It catalyses the reaction a plastoquinone + NADH + (n+1) H(+)(in) = a plastoquinol + NAD(+) + n H(+)(out). It carries out the reaction a plastoquinone + NADPH + (n+1) H(+)(in) = a plastoquinol + NADP(+) + n H(+)(out). Functionally, NDH-1 shuttles electrons from an unknown electron donor, via FMN and iron-sulfur (Fe-S) centers, to quinones in the respiratory and/or the photosynthetic chain. The immediate electron acceptor for the enzyme in this species is believed to be plastoquinone. Couples the redox reaction to proton translocation, and thus conserves the redox energy in a proton gradient. Cyanobacterial NDH-1 also plays a role in inorganic carbon-concentration. This chain is NAD(P)H-quinone oxidoreductase subunit 2, found in Prochlorococcus marinus (strain MIT 9303).